A 249-amino-acid polypeptide reads, in one-letter code: Probable transcriptional regulatory protein A1S_1496 (249 aa).

This sequence belongs to the TACO1 family.

It localises to the cytoplasm. The sequence is that of Probable transcriptional regulatory protein A1S_1496 from Acinetobacter baumannii (strain ATCC 17978 / DSM 105126 / CIP 53.77 / LMG 1025 / NCDC KC755 / 5377).